The chain runs to 358 residues: 4-diphosphocytidyl-2-C-methyl-D-erythritol kinase (358 aa).

Residue Lys-24 is part of the active site. 138–148 is an ATP binding site; that stretch reads PVAGGMAGGSA. The active site involves Asp-186.

This sequence belongs to the GHMP kinase family. IspE subfamily.

It carries out the reaction 4-CDP-2-C-methyl-D-erythritol + ATP = 4-CDP-2-C-methyl-D-erythritol 2-phosphate + ADP + H(+). It functions in the pathway isoprenoid biosynthesis; isopentenyl diphosphate biosynthesis via DXP pathway; isopentenyl diphosphate from 1-deoxy-D-xylulose 5-phosphate: step 3/6. Catalyzes the phosphorylation of the position 2 hydroxy group of 4-diphosphocytidyl-2C-methyl-D-erythritol. The sequence is that of 4-diphosphocytidyl-2-C-methyl-D-erythritol kinase from Corynebacterium jeikeium (strain K411).